The primary structure comprises 204 residues: Casparian strip membrane protein 2 (204 aa).

Residues 1–42 (MKNESTTIDVPAESSSAMKGKAPLIGVARDHTTSGSGGYNRG) lie on the Cytoplasmic side of the membrane. A helical transmembrane segment spans residues 43–63 (LSIFDFLLRLAAIVAALAAAA). The Extracellular portion of the chain corresponds to 64-92 (TMGTSDETLPFFTQFLQFEASYDDLPTFQ). A helical transmembrane segment spans residues 93–113 (FFVIAMALVGGYLVLSLPISV). Over 114–125 (VTILRPLATAPR) the chain is Cytoplasmic. Residues 126-146 (LLLLVLDTAVLALNTAAASSA) traverse the membrane as a helical segment. At 147–178 (AAISYLAHSGNQNTNWLPICQQFGDFCQKSSG) the chain is on the extracellular side. Residues 179 to 199 (AVVSAFISVVFFTILVVISGV) traverse the membrane as a helical segment. Topologically, residues 200 to 204 (ALKRH) are cytoplasmic.

It belongs to the Casparian strip membrane proteins (CASP) family. In terms of assembly, homodimer and heterodimers.

The protein localises to the cell membrane. Functionally, regulates membrane-cell wall junctions and localized cell wall deposition. Required for establishment of the Casparian strip membrane domain (CSD) and the subsequent formation of Casparian strips, a cell wall modification of the root endodermis that determines an apoplastic barrier between the intraorganismal apoplasm and the extraorganismal apoplasm and prevents lateral diffusion. The sequence is that of Casparian strip membrane protein 2 from Arabidopsis lyrata subsp. lyrata (Lyre-leaved rock-cress).